The sequence spans 408 residues: MSSSNVKKVALAYSGGLDTSVILKWLQETYGCEVVTFTADLGQGEEVEPARAKAQAMGVKEIYIDDLREEFSRDFVFPMFRANAIYEGEYLLGTSIARPLIAKRLIEIANETGADAIAHGATGKGNDQVRFELGAYALRPDIRVIAPWREWELTSRETLLAYAESRGIPIEMKRGKTSPYSMDANLLHISYEGGILEDPWAEPEETMWRWSVSPENAPDRPTYVELTYEHGDIVAIDGERMTAAAVLARLNQLGGANGIGRLDIVENRYVGMKSRGCYETPGGTIMLKAHRAIESITLDREVAHLKDELMPRYASLIYNGYWWSPERRMLQQMIDASQATVNGVVRVKLYKGNVSVVGRKSESNSLFDMNIATFEDDRGAYDQKDAEGFIKLNALRLRIAGRKGASFA.

ATP-binding positions include 12–20 (AYSGGLDTS) and Ala-39. Residues Tyr-90 and Ser-95 each contribute to the L-citrulline site. ATP is bound at residue Gly-120. Thr-122, Asn-126, and Asp-127 together coordinate L-aspartate. Asn-126 contacts L-citrulline. L-citrulline-binding residues include Arg-130, Ser-181, Ser-190, Glu-266, and Tyr-278.

This sequence belongs to the argininosuccinate synthase family. Type 1 subfamily. In terms of assembly, homotetramer.

The protein localises to the cytoplasm. It carries out the reaction L-citrulline + L-aspartate + ATP = 2-(N(omega)-L-arginino)succinate + AMP + diphosphate + H(+). The protein operates within amino-acid biosynthesis; L-arginine biosynthesis; L-arginine from L-ornithine and carbamoyl phosphate: step 2/3. This chain is Argininosuccinate synthase, found in Methylococcus capsulatus (strain ATCC 33009 / NCIMB 11132 / Bath).